Reading from the N-terminus, the 346-residue chain is DNA ligase (346 aa).

Residues Asp32–Tyr35, Arg39, Arg55–Ser57, Glu93, Glu142, and Arg149 contribute to the ATP site. Lys34 functions as the N6-AMP-lysine intermediate in the catalytic mechanism. Glu223 provides a ligand contact to a divalent metal cation. ATP is bound by residues Lys238 and Lys244.

Belongs to the ATP-dependent DNA ligase family. Requires a divalent metal cation as cofactor.

It catalyses the reaction ATP + (deoxyribonucleotide)n-3'-hydroxyl + 5'-phospho-(deoxyribonucleotide)m = (deoxyribonucleotide)n+m + AMP + diphosphate.. In terms of biological role, DNA ligase, which is expressed in the early stage of lytic development, has been implicated in T7 DNA synthesis and genetic recombination. It may also play a role in T7 DNA repair. This is DNA ligase (1.3) from Enterobacteria phage T3 (Bacteriophage T3).